The chain runs to 417 residues: 3-isopropylmalate dehydratase large subunit 2 (417 aa).

Positions 298, 358, and 361 each coordinate [4Fe-4S] cluster.

It belongs to the aconitase/IPM isomerase family. LeuC type 2 subfamily. In terms of assembly, heterodimer of LeuC and LeuD. It depends on [4Fe-4S] cluster as a cofactor.

It catalyses the reaction (2R,3S)-3-isopropylmalate = (2S)-2-isopropylmalate. The protein operates within amino-acid biosynthesis; L-leucine biosynthesis; L-leucine from 3-methyl-2-oxobutanoate: step 2/4. Its function is as follows. Catalyzes the isomerization between 2-isopropylmalate and 3-isopropylmalate, via the formation of 2-isopropylmaleate. The chain is 3-isopropylmalate dehydratase large subunit 2 from Thermotoga maritima (strain ATCC 43589 / DSM 3109 / JCM 10099 / NBRC 100826 / MSB8).